A 283-amino-acid chain; its full sequence is Elongation factor Ts (283 aa).

The segment at 80 to 83 (TDFV) is involved in Mg(2+) ion dislocation from EF-Tu.

The protein belongs to the EF-Ts family.

The protein localises to the cytoplasm. Associates with the EF-Tu.GDP complex and induces the exchange of GDP to GTP. It remains bound to the aminoacyl-tRNA.EF-Tu.GTP complex up to the GTP hydrolysis stage on the ribosome. The sequence is that of Elongation factor Ts from Cronobacter sakazakii (strain ATCC BAA-894) (Enterobacter sakazakii).